The chain runs to 213 residues: Protein FAM177A1 (213 aa).

The residue at position 1 (M1) is an N-acetylmethionine. S70 carries the post-translational modification Phosphoserine. The residue at position 71 (T71) is a Phosphothreonine. A coiled-coil region spans residues 136–173; the sequence is IDEYYRMKKEEEEEEEENRMSEEAEKQYQQNKLQTDSI. The segment at 147 to 175 is disordered; it reads EEEEEENRMSEEAEKQYQQNKLQTDSIVQ. Polar residues predominate over residues 162 to 175; it reads QYQQNKLQTDSIVQ.

The protein belongs to the FAM177 family.

The polypeptide is Protein FAM177A1 (FAM177A1) (Homo sapiens (Human)).